Consider the following 330-residue polypeptide: 4-hydroxythreonine-4-phosphate dehydrogenase (330 aa).

Substrate is bound by residues H136 and T137. A divalent metal cation-binding residues include H166, H211, and H266. Substrate is bound by residues K274, N283, and R292.

This sequence belongs to the PdxA family. As to quaternary structure, homodimer. The cofactor is Zn(2+). Mg(2+) is required as a cofactor. Requires Co(2+) as cofactor.

The protein localises to the cytoplasm. The enzyme catalyses 4-(phosphooxy)-L-threonine + NAD(+) = 3-amino-2-oxopropyl phosphate + CO2 + NADH. It participates in cofactor biosynthesis; pyridoxine 5'-phosphate biosynthesis; pyridoxine 5'-phosphate from D-erythrose 4-phosphate: step 4/5. In terms of biological role, catalyzes the NAD(P)-dependent oxidation of 4-(phosphooxy)-L-threonine (HTP) into 2-amino-3-oxo-4-(phosphooxy)butyric acid which spontaneously decarboxylates to form 3-amino-2-oxopropyl phosphate (AHAP). This chain is 4-hydroxythreonine-4-phosphate dehydrogenase, found in Erwinia tasmaniensis (strain DSM 17950 / CFBP 7177 / CIP 109463 / NCPPB 4357 / Et1/99).